We begin with the raw amino-acid sequence, 325 residues long: ATP phosphoribosyltransferase (325 aa).

This sequence belongs to the ATP phosphoribosyltransferase family. Long subfamily. It depends on Mg(2+) as a cofactor.

Its subcellular location is the cytoplasm. The enzyme catalyses 1-(5-phospho-beta-D-ribosyl)-ATP + diphosphate = 5-phospho-alpha-D-ribose 1-diphosphate + ATP. The protein operates within amino-acid biosynthesis; L-histidine biosynthesis; L-histidine from 5-phospho-alpha-D-ribose 1-diphosphate: step 1/9. With respect to regulation, feedback inhibited by histidine. Functionally, catalyzes the condensation of ATP and 5-phosphoribose 1-diphosphate to form N'-(5'-phosphoribosyl)-ATP (PR-ATP). Has a crucial role in the pathway because the rate of histidine biosynthesis seems to be controlled primarily by regulation of HisG enzymatic activity. This chain is ATP phosphoribosyltransferase, found in Rhodopseudomonas palustris (strain HaA2).